The sequence spans 266 residues: Glutamate racemase (266 aa).

Residues 9–10 (DS) and 41–42 (YG) each bind substrate. The Proton donor/acceptor role is filled by cysteine 73. 74 to 75 (NS) provides a ligand contact to substrate. Cysteine 183 (proton donor/acceptor) is an active-site residue. A substrate-binding site is contributed by 184–185 (TH).

Belongs to the aspartate/glutamate racemases family.

The catalysed reaction is L-glutamate = D-glutamate. It functions in the pathway cell wall biogenesis; peptidoglycan biosynthesis. Its function is as follows. Provides the (R)-glutamate required for cell wall biosynthesis. The chain is Glutamate racemase from Shewanella halifaxensis (strain HAW-EB4).